A 295-amino-acid polypeptide reads, in one-letter code: Aquaporin NIP2-1 (295 aa).

A run of 2 helical transmembrane segments spans residues 49–69 (VVSE…AAGI) and 83–103 (SVAG…ISGA). The NPA 1 signature appears at 106-108 (NPA). 3 helical membrane passes run 124 to 146 (VPFY…KAVL), 164 to 184 (SLVI…AVAT), and 192 to 212 (LAGL…GAVS). Positions 217 to 219 (NPA) match the NPA 2 motif. The helical transmembrane segment at 230–250 (LYTGLWIYFLGPVLGTLSGAW) threads the bilayer.

This sequence belongs to the MIP/aquaporin (TC 1.A.8) family. NIP (TC 1.A.8.12) subfamily.

It localises to the membrane. Functionally, aquaporins facilitate the transport of water and small neutral solutes across cell membranes. This chain is Aquaporin NIP2-1 (NIP2-1), found in Zea mays (Maize).